The primary structure comprises 133 residues: Small ribosomal subunit protein eS24y (133 aa).

Residues 104 to 133 (KSRKQIKERKNRAKKIRGVKKTKAGDTKKK) form a disordered region. Residues 109–125 (IKERKNRAKKIRGVKKT) show a composition bias toward basic residues.

Belongs to the eukaryotic ribosomal protein eS24 family.

The sequence is that of Small ribosomal subunit protein eS24y (RPS24B) from Arabidopsis thaliana (Mouse-ear cress).